The primary structure comprises 448 residues: UDP-N-acetylmuramoylalanine--D-glutamate ligase (448 aa).

ATP is bound at residue 116–122 (GSNAKST).

This sequence belongs to the MurCDEF family.

The protein resides in the cytoplasm. The enzyme catalyses UDP-N-acetyl-alpha-D-muramoyl-L-alanine + D-glutamate + ATP = UDP-N-acetyl-alpha-D-muramoyl-L-alanyl-D-glutamate + ADP + phosphate + H(+). It functions in the pathway cell wall biogenesis; peptidoglycan biosynthesis. Functionally, cell wall formation. Catalyzes the addition of glutamate to the nucleotide precursor UDP-N-acetylmuramoyl-L-alanine (UMA). The chain is UDP-N-acetylmuramoylalanine--D-glutamate ligase from Pseudomonas savastanoi pv. phaseolicola (strain 1448A / Race 6) (Pseudomonas syringae pv. phaseolicola (strain 1448A / Race 6)).